The sequence spans 183 residues: Ankyrin repeat domain-containing protein 39 (183 aa).

ANK repeat units lie at residues 30-59, 63-92, 96-125, and 129-158; these read DFERGIWSAALNGDLGRVKYLIQKAVDPSQ, AGYTALHYASRNGHYAVCQFLLESGAKCDA, GGATALHRASYCGHTDIARLLLSHGSNPRL, and DGMTSLHKAAEKGHVDICSLLLQHSPALKA. Serine 153 bears the Phosphoserine mark.

The protein belongs to the ANKRD39 family.

In Bos taurus (Bovine), this protein is Ankyrin repeat domain-containing protein 39 (ANKRD39).